Consider the following 685-residue polypeptide: DEAD-box ATP-dependent RNA helicase 7 (685 aa).

Residues 1–89 (MPSISMMSDA…SELVQADDLK (89 aa)) are disordered. 2 stretches are compositionally biased toward basic and acidic residues: residues 22-42 (MKSETLDSDDTVVKKEKSSSK) and 66-78 (AVDLDDSSDKSDN). Positions 107–135 (NSLSNFRISKPLKDVLISKGIKALFPIQA) match the Q motif motif. The region spanning 138 to 320 (FDNVIDGCDL…TRFLKSAKKT (183 aa)) is the Helicase ATP-binding domain. Residue 151-158 (ARTGQGKT) participates in ATP binding. A DEAD box motif is present at residues 266 to 269 (DEAD). The Helicase C-terminal domain maps to 349–491 (DLIPDIIRCY…LSAPQPVDVA (143 aa)).

This sequence belongs to the DEAD box helicase family. DDX21/DDX50 subfamily.

The protein resides in the nucleus. It carries out the reaction ATP + H2O = ADP + phosphate + H(+). This is DEAD-box ATP-dependent RNA helicase 7 (RH7) from Spinacia oleracea (Spinach).